The sequence spans 232 residues: Phosphatidylserine decarboxylase proenzyme (232 aa).

The active-site Schiff-base intermediate with substrate; via pyruvic acid is the serine 190. A Pyruvic acid (Ser); by autocatalysis modification is found at serine 190.

This sequence belongs to the phosphatidylserine decarboxylase family. PSD-A subfamily. In terms of assembly, heterodimer of a large membrane-associated beta subunit and a small pyruvoyl-containing alpha subunit. Requires pyruvate as cofactor. Post-translationally, is synthesized initially as an inactive proenzyme. Formation of the active enzyme involves a self-maturation process in which the active site pyruvoyl group is generated from an internal serine residue via an autocatalytic post-translational modification. Two non-identical subunits are generated from the proenzyme in this reaction, and the pyruvate is formed at the N-terminus of the alpha chain, which is derived from the carboxyl end of the proenzyme. The post-translation cleavage follows an unusual pathway, termed non-hydrolytic serinolysis, in which the side chain hydroxyl group of the serine supplies its oxygen atom to form the C-terminus of the beta chain, while the remainder of the serine residue undergoes an oxidative deamination to produce ammonia and the pyruvoyl prosthetic group on the alpha chain.

It is found in the cell membrane. It carries out the reaction a 1,2-diacyl-sn-glycero-3-phospho-L-serine + H(+) = a 1,2-diacyl-sn-glycero-3-phosphoethanolamine + CO2. The protein operates within phospholipid metabolism; phosphatidylethanolamine biosynthesis; phosphatidylethanolamine from CDP-diacylglycerol: step 2/2. Catalyzes the formation of phosphatidylethanolamine (PtdEtn) from phosphatidylserine (PtdSer). The sequence is that of Phosphatidylserine decarboxylase proenzyme from Bradyrhizobium sp. (strain ORS 278).